The primary structure comprises 1537 residues: Leucine-rich repeat-containing protein 7 (1537 aa).

17 LRR repeats span residues 23 to 44 (IISV…VFNF), 47 to 68 (TLEE…LFNC), 70 to 91 (ALRK…IASL), 93 to 114 (NLKE…IKCC), 116 to 137 (CLTI…FTQL), 139 to 161 (NLTQ…GRLV), 162 to 183 (KLRI…MHKL), 185 to 206 (QLER…LDQI), 208 to 229 (NLRE…IGKL), 231 to 253 (MLVY…SGCE), 254 to 275 (ALED…IGLL), 277 to 298 (KLTT…IGNL), 300 to 321 (LLEE…IGYL), 323 to 344 (SLRT…IGSC), 346 to 367 (NVTV…IGQM), 369 to 391 (KLRV…TKLK), and 392 to 413 (ELAA…QTEA). Phosphoserine is present on residues S439, S441, and S443. Positions 663 to 676 (KKESTDESEVDKTH) are enriched in basic and acidic residues. 4 disordered regions span residues 663–709 (KKES…VGSL), 730–759 (FPQP…DRLP), 786–810 (AENA…RRPL), and 824–892 (EQST…SPGV). Over residues 677–709 (CLNNSVSSGTYSDYSPSQASSGSSNTRVKVGSL) the composition is skewed to polar residues. Residues 790 to 804 (NSNPLLSSKSRSTSS) are compositionally biased toward low complexity. Position 831 is a phosphothreonine (T831). Position 850 is a phosphoserine (S850). Low complexity predominate over residues 859-871 (PSKLETTPTTSPL). The residue at position 865 (T865) is a Phosphothreonine. At S869 the chain carries Phosphoserine. The span at 872 to 882 (PERKEHIKEST) shows a compositional bias: basic and acidic residues. Phosphoserine is present on residues S947, S949, and S1118. Residues 1136–1159 (ELPPTDRYGRPPYRGGLDRQSSVT) form a disordered region. An Omega-N-methylarginine modification is found at R1149. The residue at position 1233 (S1233) is a Phosphoserine. Disordered regions lie at residues 1234-1265 (DYNL…SCGK) and 1331-1360 (QKTP…YPLG). The segment covering 1243 to 1263 (KPSDNSDLKTRPTPVKGEESC) has biased composition (basic and acidic residues). Polar residues predominate over residues 1332–1354 (KTPSQQSNILDNGQEDVSPSGQW). Phosphoserine is present on residues S1335 and S1439. Residues 1445–1535 (EQFCVRIEKN…TVDLVIQREL (91 aa)) form the PDZ domain.

This sequence belongs to the LAP (LRR and PDZ) protein family. Interacts with CNKSR2 and DLG4. Interacts with CTNND2/Catenin delta-2. Forms a complex with N-cadherin through CTNND2. Interacts with CAMK2A. In terms of tissue distribution, brain-specific. Isoform 3 is ubiquitously expressed.

The protein resides in the cytoplasm. Its subcellular location is the postsynaptic density. Its function is as follows. Required for normal synaptic spine architecture and function. Necessary for DISC1 and GRM5 localization to postsynaptic density complexes and for both N-methyl D-aspartate receptor-dependent and metabotropic glutamate receptor-dependent long term depression. This is Leucine-rich repeat-containing protein 7 (LRRC7) from Homo sapiens (Human).